A 341-amino-acid chain; its full sequence is S-adenosylmethionine:tRNA ribosyltransferase-isomerase (341 aa).

Belongs to the QueA family. Monomer.

The protein resides in the cytoplasm. The enzyme catalyses 7-aminomethyl-7-carbaguanosine(34) in tRNA + S-adenosyl-L-methionine = epoxyqueuosine(34) in tRNA + adenine + L-methionine + 2 H(+). Its pathway is tRNA modification; tRNA-queuosine biosynthesis. Transfers and isomerizes the ribose moiety from AdoMet to the 7-aminomethyl group of 7-deazaguanine (preQ1-tRNA) to give epoxyqueuosine (oQ-tRNA). The protein is S-adenosylmethionine:tRNA ribosyltransferase-isomerase of Thermoanaerobacter sp. (strain X514).